The sequence spans 173 residues: Inorganic pyrophosphatase (173 aa).

Substrate-binding residues include Lys29, Arg43, and Tyr55. Residues Asp65, Asp70, and Asp102 each coordinate Mg(2+). Tyr141 provides a ligand contact to substrate.

The protein belongs to the PPase family. In terms of assembly, homohexamer. Mg(2+) serves as cofactor.

The protein localises to the cytoplasm. The enzyme catalyses diphosphate + H2O = 2 phosphate + H(+). Its function is as follows. Catalyzes the hydrolysis of inorganic pyrophosphate (PPi) forming two phosphate ions. This chain is Inorganic pyrophosphatase, found in Rickettsia conorii (strain ATCC VR-613 / Malish 7).